Consider the following 163-residue polypeptide: E1B protein, small T-antigen (163 aa).

The protein belongs to the adenoviridae E1B 19 kDa protein family.

It localises to the host cell membrane. The protein resides in the host nucleus envelope. The protein localises to the host nucleus lamina. In terms of biological role, putative adenovirus Bcl-2 homolog that inhibits apoptosis induced by TNF or FAS pathways, as well as p53-mediated apoptosis. Without E1B 19K function, virus production is compromised because of premature death of host cell. Interacts with Bax protein in cell lysates. This chain is E1B protein, small T-antigen, found in Human adenovirus A serotype 12 (HAdV-12).